The chain runs to 290 residues: Acetylglutamate kinase (290 aa).

Residues 60-61 (GG), arginine 82, and asparagine 185 each bind substrate.

Belongs to the acetylglutamate kinase family. ArgB subfamily.

It is found in the cytoplasm. It catalyses the reaction N-acetyl-L-glutamate + ATP = N-acetyl-L-glutamyl 5-phosphate + ADP. The protein operates within amino-acid biosynthesis; L-arginine biosynthesis; N(2)-acetyl-L-ornithine from L-glutamate: step 2/4. In terms of biological role, catalyzes the ATP-dependent phosphorylation of N-acetyl-L-glutamate. The protein is Acetylglutamate kinase of Archaeoglobus fulgidus (strain ATCC 49558 / DSM 4304 / JCM 9628 / NBRC 100126 / VC-16).